The chain runs to 154 residues: Nuclear cap-binding protein subunit 2 (154 aa).

MRNA-binding positions include Tyr10, Tyr33, 102–106 (RVDWD), 113–117 (RQYGR), and 123–124 (QV). Residues 30-108 (CTLYVGNLSF…RLIRVDWDAG (79 aa)) enclose the RRM domain.

The protein belongs to the RRM NCBP2 family. As to quaternary structure, component of the nuclear cap-binding complex (CBC), a heterodimer composed of Cbp80 and Cbp20 that interacts with m7GpppG-capped RNA. Interacts with Ars2.

Its subcellular location is the nucleus. Its function is as follows. Component of the cap-binding complex (CBC), which binds co-transcriptionally to the 5' cap of pre-mRNAs and is involved in various processes such as pre-mRNA splicing and RNA-mediated gene silencing (RNAi). The CBC complex is involved in miRNA-mediated RNA interference via its interaction with Ars2 and is required for primary microRNAs (miRNAs) processing. Also involved in innate immunity via the short interfering RNAs (siRNAs) processing machinery by restricting the viral RNA production. In the CBC complex, Cbp20 recognizes and binds capped RNAs (m7GpppG-capped RNA) but requires Cbp80 to stabilize the movement of its N-terminal loop and lock the CBC into a high affinity cap-binding state with the cap structure. The polypeptide is Nuclear cap-binding protein subunit 2 (Cbp20) (Drosophila persimilis (Fruit fly)).